The chain runs to 242 residues: Uridylate kinase (242 aa).

11–14 (KLSG) is an ATP binding site. The interval 19 to 24 (GNMGYG) is involved in allosteric activation by GTP. Glycine 53 is a binding site for UMP. ATP is bound by residues glycine 54 and arginine 58. Residues aspartate 73 and 134-141 (SGNPFFTT) contribute to the UMP site. Residues threonine 161, tyrosine 167, and aspartate 170 each coordinate ATP.

It belongs to the UMP kinase family. In terms of assembly, homohexamer.

The protein localises to the cytoplasm. The enzyme catalyses UMP + ATP = UDP + ADP. Its pathway is pyrimidine metabolism; CTP biosynthesis via de novo pathway; UDP from UMP (UMPK route): step 1/1. Its activity is regulated as follows. Allosterically activated by GTP. Inhibited by UTP. Catalyzes the reversible phosphorylation of UMP to UDP. The polypeptide is Uridylate kinase (Trichormus variabilis (strain ATCC 29413 / PCC 7937) (Anabaena variabilis)).